A 336-amino-acid chain; its full sequence is Isethionate-binding periplasmic protein DctP (336 aa).

Positions 1–23 (MKHLLKAGALVALACIVTLTAGA) are cleaved as a signal peptide.

Belongs to the bacterial solute-binding protein 7 family. The complex comprises the periplasmic solute receptor protein DctP, and the fused transmembrane protein DctMQ.

It localises to the periplasm. The enzyme catalyses 2-hydroxyethane-1-sulfonate(out) + Na(+)(out) = 2-hydroxyethane-1-sulfonate(in) + Na(+)(in). It participates in organosulfur degradation; alkanesulfonate degradation. Its function is as follows. Part of the tripartite ATP-independent periplasmic (TRAP) transport system DctPQM involved in the uptake of isethionate (2-hydroxyethanesulfonate), which is then catabolized by enzymes encoded by adjacent genes in the locus. The DctP subunit is the solute-binding protein. Thereby is involved in an anaerobic respiration pathway that converts the sulfonate isethionate to ammonia, acetate and sulfide. This chain is Isethionate-binding periplasmic protein DctP, found in Oleidesulfovibrio alaskensis (strain ATCC BAA-1058 / DSM 17464 / G20) (Desulfovibrio alaskensis).